The sequence spans 129 residues: Small ribosomal subunit protein uS11 (129 aa).

It belongs to the universal ribosomal protein uS11 family. As to quaternary structure, part of the 30S ribosomal subunit. Interacts with proteins S7 and S18. Binds to IF-3.

Located on the platform of the 30S subunit, it bridges several disparate RNA helices of the 16S rRNA. Forms part of the Shine-Dalgarno cleft in the 70S ribosome. This is Small ribosomal subunit protein uS11 from Nitrosomonas europaea (strain ATCC 19718 / CIP 103999 / KCTC 2705 / NBRC 14298).